Consider the following 292-residue polypeptide: 4-diphosphocytidyl-2-C-methyl-D-erythritol kinase (292 aa).

Lys-10 is a catalytic residue. 94–104 is an ATP binding site; the sequence is PVAAGLAGGSS. Asp-136 is a catalytic residue.

The protein belongs to the GHMP kinase family. IspE subfamily.

The enzyme catalyses 4-CDP-2-C-methyl-D-erythritol + ATP = 4-CDP-2-C-methyl-D-erythritol 2-phosphate + ADP + H(+). It functions in the pathway isoprenoid biosynthesis; isopentenyl diphosphate biosynthesis via DXP pathway; isopentenyl diphosphate from 1-deoxy-D-xylulose 5-phosphate: step 3/6. Functionally, catalyzes the phosphorylation of the position 2 hydroxy group of 4-diphosphocytidyl-2C-methyl-D-erythritol. The polypeptide is 4-diphosphocytidyl-2-C-methyl-D-erythritol kinase (Brevibacillus brevis (strain 47 / JCM 6285 / NBRC 100599)).